The chain runs to 425 residues: Histidine--tRNA ligase (425 aa).

It belongs to the class-II aminoacyl-tRNA synthetase family. Homodimer.

It is found in the cytoplasm. The enzyme catalyses tRNA(His) + L-histidine + ATP = L-histidyl-tRNA(His) + AMP + diphosphate + H(+). This Shewanella sp. (strain MR-4) protein is Histidine--tRNA ligase.